The primary structure comprises 127 residues: Fluoride-specific ion channel FluC (127 aa).

Helical transmembrane passes span 8 to 28 (LLIAFGGTIGSIFRYLLQYWF), 37 to 57 (PWGTLTANLLGSFLIGVVYAI), 68 to 88 (WKFLLASGFCGGFTTFSTFSY), and 100 to 120 (ILFLGYICLSVVGGIGFAFAG). The Na(+) site is built by Gly-78 and Thr-81.

Belongs to the fluoride channel Fluc/FEX (TC 1.A.43) family.

It localises to the cell inner membrane. It carries out the reaction fluoride(in) = fluoride(out). With respect to regulation, na(+) is not transported, but it plays an essential structural role and its presence is essential for fluoride channel function. Fluoride-specific ion channel. Important for reducing fluoride concentration in the cell, thus reducing its toxicity. This Leptospira interrogans serogroup Icterohaemorrhagiae serovar Lai (strain 56601) protein is Fluoride-specific ion channel FluC.